We begin with the raw amino-acid sequence, 367 residues long: Alanine racemase (367 aa).

Residue lysine 40 is the Proton acceptor; specific for D-alanine of the active site. Lysine 40 carries the N6-(pyridoxal phosphate)lysine modification. Arginine 136 contacts substrate. The active-site Proton acceptor; specific for L-alanine is the tyrosine 263. A substrate-binding site is contributed by methionine 310.

The protein belongs to the alanine racemase family. Requires pyridoxal 5'-phosphate as cofactor.

It catalyses the reaction L-alanine = D-alanine. It participates in amino-acid biosynthesis; D-alanine biosynthesis; D-alanine from L-alanine: step 1/1. In terms of biological role, catalyzes the interconversion of L-alanine and D-alanine. May also act on other amino acids. This Streptococcus pneumoniae serotype 19F (strain G54) protein is Alanine racemase (alr).